The chain runs to 225 residues: MENQPKLNSSKEVIAFLAERFPQCFSAEGEARPLKIGIFQDLVERVGGEMNLSKTQLRAALRLYTSSWRYLYGVKAGAIRVDLDGNPCGELEEQHIAHARQQLEEAKARVQTQRAAQQAKKREAAAAAGQQDEGVRRERKPRPQQPRRKEGAEQRKPRPVAAKAPREERHTPVSDVSVLTVGQALKVKAGNNAMDATVLEITKDGVRVQLTSGMSMIVRAEHLVF.

A disordered region spans residues 103–173 (LEEAKARVQT…APREERHTPV (71 aa)). Low complexity predominate over residues 109-118 (RVQTQRAAQQ). Basic residues predominate over residues 137-146 (RERKPRPQQP). Over residues 147–156 (RRKEGAEQRK) the composition is skewed to basic and acidic residues.

It belongs to the ProQ family.

It localises to the cytoplasm. In terms of biological role, RNA chaperone with significant RNA binding, RNA strand exchange and RNA duplexing activities. May regulate ProP activity through an RNA-based, post-transcriptional mechanism. This chain is RNA chaperone ProQ, found in Klebsiella pneumoniae (strain 342).